A 443-amino-acid polypeptide reads, in one-letter code: Elongation factor 1-alpha (443 aa).

Residues 5–228 (KTHINLVVIG…DTMQPPKRPY (224 aa)) enclose the tr-type G domain. The G1 stretch occupies residues 14 to 21 (GHVDSGKS). 14 to 21 (GHVDSGKS) is a binding site for GTP. The G2 stretch occupies residues 70–74 (GITID). Positions 91–94 (DAPG) are G3. GTP-binding positions include 91 to 95 (DAPGH) and 153 to 156 (NKMD). Residues 153 to 156 (NKMD) are G4. The segment at 192-194 (SGF) is G5.

Belongs to the TRAFAC class translation factor GTPase superfamily. Classic translation factor GTPase family. EF-Tu/EF-1A subfamily.

The protein resides in the cytoplasm. Its function is as follows. This protein promotes the GTP-dependent binding of aminoacyl-tRNA to the A-site of ribosomes during protein biosynthesis. The polypeptide is Elongation factor 1-alpha (MEF-1) (Plasmodium falciparum (isolate K1 / Thailand)).